The chain runs to 283 residues: Bifunctional protein FolD (283 aa).

NADP(+) contacts are provided by residues 164 to 166, S189, and I230; that span reads GRS.

It belongs to the tetrahydrofolate dehydrogenase/cyclohydrolase family. Homodimer.

It catalyses the reaction (6R)-5,10-methylene-5,6,7,8-tetrahydrofolate + NADP(+) = (6R)-5,10-methenyltetrahydrofolate + NADPH. It carries out the reaction (6R)-5,10-methenyltetrahydrofolate + H2O = (6R)-10-formyltetrahydrofolate + H(+). It functions in the pathway one-carbon metabolism; tetrahydrofolate interconversion. Its function is as follows. Catalyzes the oxidation of 5,10-methylenetetrahydrofolate to 5,10-methenyltetrahydrofolate and then the hydrolysis of 5,10-methenyltetrahydrofolate to 10-formyltetrahydrofolate. The polypeptide is Bifunctional protein FolD (Lactobacillus delbrueckii subsp. bulgaricus (strain ATCC 11842 / DSM 20081 / BCRC 10696 / JCM 1002 / NBRC 13953 / NCIMB 11778 / NCTC 12712 / WDCM 00102 / Lb 14)).